Reading from the N-terminus, the 461-residue chain is D-phenylhydantoinase (461 aa).

A divalent metal cation is bound by residues H59, H61, and K151. K151 bears the N6-carboxylysine mark. Residue Y156 coordinates substrate. H182 and H239 together coordinate a divalent metal cation. S286 is a binding site for substrate. D313 contacts a divalent metal cation. A substrate-binding site is contributed by N335.

The protein belongs to the metallo-dependent hydrolases superfamily. Hydantoinase/dihydropyrimidinase family. Homotetramer. The cofactor is a divalent metal cation. In terms of processing, carboxylation allows a single lysine to coordinate two divalent metal cations.

It catalyses the reaction D-5-phenylhydantoin + H2O = N-carbamoyl-D-phenylglycine + H(+). Functionally, catalyzes the stereospecific hydrolysis of the cyclic amide bond of D-hydantoin derivatives with an aromatic side chains at the 5'-position. Has no activity on dihydropyrimidines. The physiological function is unknown. The chain is D-phenylhydantoinase from Escherichia coli O6:K15:H31 (strain 536 / UPEC).